The following is a 1116-amino-acid chain: Protein translocase subunit SecA (1116 aa).

Residues glutamine 176, 194-198 (GEGKT), and aspartate 693 contribute to the ATP site.

Belongs to the SecA family. As to quaternary structure, monomer and homodimer. Part of the essential Sec protein translocation apparatus which comprises SecA, SecYEG and auxiliary proteins SecDF. Other proteins may also be involved.

It localises to the cell inner membrane. Its subcellular location is the cytoplasm. It catalyses the reaction ATP + H2O + cellular proteinSide 1 = ADP + phosphate + cellular proteinSide 2.. Functionally, part of the Sec protein translocase complex. Interacts with the SecYEG preprotein conducting channel. Has a central role in coupling the hydrolysis of ATP to the transfer of proteins into and across the cell membrane, serving as an ATP-driven molecular motor driving the stepwise translocation of polypeptide chains across the membrane. The sequence is that of Protein translocase subunit SecA from Amoebophilus asiaticus (strain 5a2).